A 433-amino-acid polypeptide reads, in one-letter code: tRNA-2-methylthio-N(6)-dimethylallyladenosine synthase (433 aa).

The region spanning 3 to 118 (KKLFIQTLGC…ISTAVKTPKF (116 aa)) is the MTTase N-terminal domain. [4Fe-4S] cluster-binding residues include Cys12, Cys49, Cys81, Cys150, Cys154, and Cys157. One can recognise a Radical SAM core domain in the interval 136 to 369 (RGSPYKSHIN…QSRHNEILDE (234 aa)). Residues 372–433 (AAQEGKILDV…RMVLYGELAN (62 aa)) enclose the TRAM domain.

Belongs to the methylthiotransferase family. MiaB subfamily. As to quaternary structure, monomer. [4Fe-4S] cluster serves as cofactor.

The protein localises to the cytoplasm. It carries out the reaction N(6)-dimethylallyladenosine(37) in tRNA + (sulfur carrier)-SH + AH2 + 2 S-adenosyl-L-methionine = 2-methylsulfanyl-N(6)-dimethylallyladenosine(37) in tRNA + (sulfur carrier)-H + 5'-deoxyadenosine + L-methionine + A + S-adenosyl-L-homocysteine + 2 H(+). In terms of biological role, catalyzes the methylthiolation of N6-(dimethylallyl)adenosine (i(6)A), leading to the formation of 2-methylthio-N6-(dimethylallyl)adenosine (ms(2)i(6)A) at position 37 in tRNAs that read codons beginning with uridine. The polypeptide is tRNA-2-methylthio-N(6)-dimethylallyladenosine synthase (Campylobacter curvus (strain 525.92)).